A 188-amino-acid chain; its full sequence is Elongation factor P (188 aa).

This sequence belongs to the elongation factor P family.

The protein resides in the cytoplasm. Its pathway is protein biosynthesis; polypeptide chain elongation. Functionally, involved in peptide bond synthesis. Stimulates efficient translation and peptide-bond synthesis on native or reconstituted 70S ribosomes in vitro. Probably functions indirectly by altering the affinity of the ribosome for aminoacyl-tRNA, thus increasing their reactivity as acceptors for peptidyl transferase. This is Elongation factor P from Cellvibrio japonicus (strain Ueda107) (Pseudomonas fluorescens subsp. cellulosa).